We begin with the raw amino-acid sequence, 207 residues long: Large ribosomal subunit protein uL4 (207 aa).

The interval 48–78 is disordered; that stretch reads THKVKTRSEVRGGGRKPWRQKGTGRARQGSI. Residues 60-71 show a composition bias toward basic residues; that stretch reads GGRKPWRQKGTG.

This sequence belongs to the universal ribosomal protein uL4 family. In terms of assembly, part of the 50S ribosomal subunit.

In terms of biological role, one of the primary rRNA binding proteins, this protein initially binds near the 5'-end of the 23S rRNA. It is important during the early stages of 50S assembly. It makes multiple contacts with different domains of the 23S rRNA in the assembled 50S subunit and ribosome. Forms part of the polypeptide exit tunnel. The polypeptide is Large ribosomal subunit protein uL4 (Bacillus pumilus (strain SAFR-032)).